Consider the following 79-residue polypeptide: U-actitoxin-Avd8b (79 aa).

Positions 1 to 19 (MKSLVIVFVVLLGVAMISA) are cleaved as a signal peptide. A propeptide spanning residues 20-36 (NEEELLAILQDQRNDAR) is cleaved from the precursor.

The protein belongs to the sea anemone 8 toxin family.

The protein localises to the secreted. It is found in the nematocyst. This chain is U-actitoxin-Avd8b, found in Anemonia viridis (Snakelocks anemone).